Here is an 873-residue protein sequence, read N- to C-terminus: MFGFIKKVLDFFGVDQSEDNPSETAVETTDVSTKIKTTDTTQEESSVKTKTVVPTQPGGSVKPETIAPDQQKKHQIKTETTTSTTKQKGPKVTLMDGHVKQYYFARRGETSTHDTSLPPPVKVLSGRSIPLKEIPFEATRNELVQIYLTSIDKLIKSNKLNSIPSQQIASHYLFLRSLANSETDGIKKNQILSLAKPLGTYLASKEPHVWKMINELIEKSEYPIIHYLKNNRAHSNFMLALIHEYHKEPLTKNQSAFVQKFRDSSVFLFPNPIYTAWLAHSYDEDSSFNPMFRERLSTNFYHSTLTDNLLLRTEPKEVTLSSEHHYKKEKGPIDSSFRYQMSSDRLLRIQGRTLLFSTPQNDVVAVKVQKKGEPKSTLEEEFEMADYLLKHQRRLDVHSKLPQPLGQYSVKKSEILEISRGSLDFERFKTLIDDSKDLEVYVYKAPQSYFTYLHDKNQDLEDLTASVKTNVHDLFVLLREGIVFPQLADIFHTHFGEDEREDKGRYQALVQLLNVLQFQLGRIDKWQKAVEYVNLRSSGLADLGDSLPITSLFTSSDFTKHYFSELLTGGYHPTFFDKSSGTANSLFTGKRRLFGNYLYLNTIAEYLLVIQLTLGSYGDKVTRDMMDKPKKEAVWRELANVMFTSCAEAIHIMTGIPQSRALTLLKQRANIEKHFRQTQFWMTPDYSKLDEDTLQMEQYSIYSGEPEYEFTDKLVSGVGLSVDGVHQDLGGYNRESPLRELEKLLYATVTLIEGTMQLDKEFFKQLEQVEKILSGEIKTDANSCFEAVAQLLDLARPGCHFQKRLVLSYYEEAKLKYPSAPTDAYDSRFQVVARTNAAITIQRFWREARKNLSEKSDIDSEKPESERTTDKRL.

Residues 16 to 90 form a disordered region; that stretch reads QSEDNPSETA…TTSTTKQKGP (75 aa). Positions 22–58 are enriched in polar residues; sequence SETAVETTDVSTKIKTTDTTQEESSVKTKTVVPTQPG. Mg(2+) is bound by residues aspartate 542 and aspartate 545. Residues 851 to 873 form a disordered region; the sequence is NLSEKSDIDSEKPESERTTDKRL.

Interacts with host calmodulin/CALM1; this interaction is required for glutamylase activity. It depends on Mg(2+) as a cofactor.

It catalyses the reaction L-glutamyl-[protein] + L-glutamate + ATP = gamma-L-glutamyl-L-glutamyl-[protein] + ADP + phosphate + H(+). The catalysed reaction is (L-glutamyl)(n)-gamma-L-glutamyl-L-glutamyl-[protein] + L-glutamate + ATP = (L-glutamyl)(n+1)-gamma-L-glutamyl-L-glutamyl-[protein] + ADP + phosphate + H(+). With respect to regulation, glytamylation catalyzed by SidJ requires host calmodulin and can be regulated by intracellular changes in Ca2+ concentrations. Also requires ATP. Glutamylase that mediates the covalent attachment of glutamate moieties to SdeA on one of the catalytic residues that is required for its mono-ADP-ribosyltransferase activity. In turn, inhibits SdeA ubiquitinating activity. Also glutamylates related SdeB, SdeC and SidE. Glutamylase activity only occurs in the host since it requires host calmodulin. May also reverse the SdeA-mediated substrate ubiquitination by cleaving the phosphodiester bond that links phosphoribosylated ubiquitin to protein substrates via its deubiquitinase activity. This chain is Calmodulin-dependent glutamylase SidJ, found in Legionella pneumophila subsp. pneumophila (strain Philadelphia 1 / ATCC 33152 / DSM 7513).